Here is a 1386-residue protein sequence, read N- to C-terminus: Putative ATP-dependent RNA helicase DHX57 (1386 aa).

Residues M1–P11 show a composition bias toward basic residues. Disordered regions lie at residues M1–E106 and E120–R147. Composition is skewed to gly residues over residues G12–G23 and G35–N50. Positions L101–A125 form a coiled coil. Phosphoserine is present on residues S127 and S132. Acidic residues predominate over residues G133–C143. Residues T180–Q220 form the UBA domain. The C3H1-type zinc finger occupies E299–P326. A phosphoserine mark is found at S475, S477, and S480. Residues L554–P721 form the Helicase ATP-binding domain. G567–T574 is a binding site for ATP. The DEVH box motif lies at D668–H671. A Helicase C-terminal domain is found at L830 to E1010.

The protein belongs to the DEAD box helicase family. DEAH subfamily.

It catalyses the reaction ATP + H2O = ADP + phosphate + H(+). Its function is as follows. Probable ATP-binding RNA helicase. The protein is Putative ATP-dependent RNA helicase DHX57 (DHX57) of Homo sapiens (Human).